Here is a 180-residue protein sequence, read N- to C-terminus: DHKNSPEKFYDNIEHHYEFIGDKLIIGKFCAIAEGVKFIMNGANHRMDGITTYPFNIFGCGWEKVTPTIEQLPFKGDTVIGNDVWIGQNVTIMPGVIIGDGAIIAANSTVVKSVEPYSIYSGNPAKFIKKRFSDEKIEFLLKLEWWNWSGEEIFDNLEILTSEAGLEELMNKYSKRDAIN.

Belongs to the transferase hexapeptide repeat family.

This chain is Probable macrolide acetyltransferase, found in Lysinibacillus sphaericus (Bacillus sphaericus).